Here is an 837-residue protein sequence, read N- to C-terminus: WW domain-containing protein tag-325 (837 aa).

The span at 1 to 11 shows a compositional bias: polar residues; sequence MTTAVQPSDTT. The disordered stretch occupies residues 1 to 66; that stretch reads MTTAVQPSDT…SNGQNYADDP (66 aa). Over residues 33-43 the composition is skewed to low complexity; it reads SESAESSSSSS. Over residues 44 to 61 the composition is skewed to polar residues; sequence QTNVSAANTLPRESNGQN. Residues 96-129 enclose the WW domain; it reads RDLLNGWFEYETDVGRTFFFNKETGKSQWIPPRF. The span at 150–161 shows a compositional bias: low complexity; it reads TCSFQGSSTSSS. Disordered stretches follow at residues 150 to 181, 194 to 257, 338 to 403, 548 to 574, and 778 to 800; these read TCSF…RKSQ, DDVD…STAS, TTSS…EPAE, MRRR…EPRP, and KNKK…TPVQ. Over residues 162-181 the composition is skewed to basic and acidic residues; it reads EEQKENKMRESLADDDRKSQ. A compositionally biased stretch (polar residues) spans 247–257; the sequence is PTSSRKASTAS. Over residues 371–403 the composition is skewed to basic and acidic residues; sequence RCEERRGSGDGREPVRTIRCGDLERSENDEPAE. In terms of domain architecture, PH spans 386–505; it reads RTIRCGDLER…WYKSLEEVVA (120 aa). A compositionally biased stretch (polar residues) spans 556–569; the sequence is SQSAIETVSTSVST. Positions 610–827 constitute a Rho-GAP domain; the sequence is STLSAICQHE…YLLESANKFD (218 aa). Over residues 778-788 the composition is skewed to basic residues; sequence KNKKAGKKAKP.

The protein is WW domain-containing protein tag-325 (tag-325) of Caenorhabditis elegans.